The primary structure comprises 297 residues: Elongation factor Ts (297 aa).

Residues 82–85 are involved in Mg(2+) ion dislocation from EF-Tu; sequence TDFV.

Belongs to the EF-Ts family.

Its subcellular location is the cytoplasm. In terms of biological role, associates with the EF-Tu.GDP complex and induces the exchange of GDP to GTP. It remains bound to the aminoacyl-tRNA.EF-Tu.GTP complex up to the GTP hydrolysis stage on the ribosome. In Azoarcus sp. (strain BH72), this protein is Elongation factor Ts.